A 201-amino-acid polypeptide reads, in one-letter code: 3-isopropylmalate dehydratase small subunit (201 aa).

This sequence belongs to the LeuD family. LeuD type 1 subfamily. As to quaternary structure, heterodimer of LeuC and LeuD.

The catalysed reaction is (2R,3S)-3-isopropylmalate = (2S)-2-isopropylmalate. The protein operates within amino-acid biosynthesis; L-leucine biosynthesis; L-leucine from 3-methyl-2-oxobutanoate: step 2/4. Catalyzes the isomerization between 2-isopropylmalate and 3-isopropylmalate, via the formation of 2-isopropylmaleate. The chain is 3-isopropylmalate dehydratase small subunit from Shewanella piezotolerans (strain WP3 / JCM 13877).